The primary structure comprises 177 residues: Large ribosomal subunit protein uL6 (177 aa).

A disordered region spans residues 155–177 (EPYKGKGVKHADERIFRKEGKKK).

It belongs to the universal ribosomal protein uL6 family. Part of the 50S ribosomal subunit.

Functionally, this protein binds to the 23S rRNA, and is important in its secondary structure. It is located near the subunit interface in the base of the L7/L12 stalk, and near the tRNA binding site of the peptidyltransferase center. The polypeptide is Large ribosomal subunit protein uL6 (Bartonella tribocorum (strain CIP 105476 / IBS 506)).